Reading from the N-terminus, the 157-residue chain is Protein Smg (157 aa).

The protein belongs to the Smg family.

This Escherichia coli O7:K1 (strain IAI39 / ExPEC) protein is Protein Smg.